We begin with the raw amino-acid sequence, 312 residues long: Cytochrome c biogenesis protein CcsA (312 aa).

The next 8 helical transmembrane spans lie at Ile-9–Phe-29, Gly-44–Gly-64, Leu-71–Phe-91, Gly-111–Leu-131, Met-143–Ile-163, Val-216–Asn-236, Trp-251–Leu-271, and Ala-277–Leu-297.

It belongs to the CcmF/CycK/Ccl1/NrfE/CcsA family. As to quaternary structure, may interact with Ccs1.

The protein localises to the plastid. It is found in the chloroplast thylakoid membrane. In terms of biological role, required during biogenesis of c-type cytochromes (cytochrome c6 and cytochrome f) at the step of heme attachment. The polypeptide is Cytochrome c biogenesis protein CcsA (Atropa belladonna (Belladonna)).